Reading from the N-terminus, the 82-residue chain is Large ribosomal subunit protein uL23 (82 aa).

The protein belongs to the universal ribosomal protein uL23 family. Part of the 50S ribosomal subunit. Contacts protein L29.

Binds to 23S rRNA. One of the proteins that surrounds the polypeptide exit tunnel on the outside of the ribosome. The chain is Large ribosomal subunit protein uL23 from Methanococcoides burtonii (strain DSM 6242 / NBRC 107633 / OCM 468 / ACE-M).